A 188-amino-acid chain; its full sequence is Elongation factor P (188 aa).

Belongs to the elongation factor P family.

It localises to the cytoplasm. Its pathway is protein biosynthesis; polypeptide chain elongation. Its function is as follows. Involved in peptide bond synthesis. Stimulates efficient translation and peptide-bond synthesis on native or reconstituted 70S ribosomes in vitro. Probably functions indirectly by altering the affinity of the ribosome for aminoacyl-tRNA, thus increasing their reactivity as acceptors for peptidyl transferase. In Methylorubrum populi (strain ATCC BAA-705 / NCIMB 13946 / BJ001) (Methylobacterium populi), this protein is Elongation factor P.